Here is an 834-residue protein sequence, read N- to C-terminus: Arf-GAP with coiled-coil, ANK repeat and PH domain-containing protein 3 (834 aa).

A PH domain is found at 268–363 (GVVMEGYLFK…WVQAVQASIA (96 aa)). The disordered stretch occupies residues 375-400 (SERLDRTASPSTSSIDSATDTRERGV). Positions 382–392 (ASPSTSSIDSA) are enriched in polar residues. Residues 403–525 (ESVLQRVQSV…KFLRKAPMAP (123 aa)) enclose the Arf-GAP domain. The C4-type zinc finger occupies 418-441 (CGDCGQPDPRWASINLGVLLCIEC). Residues 633–653 (SVTEEEGAESEESSGEADGDT) are disordered. A compositionally biased stretch (acidic residues) spans 634 to 653 (VTEEEGAESEESSGEADGDT). ANK repeat units lie at residues 702-731 (EGKT…DVNQ), 735-764 (RGRA…DQHA), and 768-797 (EQRD…AEEM).

Its function is as follows. GTPase-activating protein for the ADP ribosylation factor family. The sequence is that of Arf-GAP with coiled-coil, ANK repeat and PH domain-containing protein 3 (ACAP3) from Homo sapiens (Human).